The primary structure comprises 283 residues: Nucleotide-binding protein ABBFA_002973 (283 aa).

Residue 9-16 (GQSGSGKS) participates in ATP binding. 59 to 62 (DVRS) contacts GTP.

This sequence belongs to the RapZ-like family.

Its function is as follows. Displays ATPase and GTPase activities. This is Nucleotide-binding protein ABBFA_002973 from Acinetobacter baumannii (strain AB307-0294).